Reading from the N-terminus, the 294-residue chain is 33 kDa chaperonin (294 aa).

2 disulfides stabilise this stretch: cysteine 238-cysteine 240 and cysteine 271-cysteine 274.

Belongs to the HSP33 family. Under oxidizing conditions two disulfide bonds are formed involving the reactive cysteines. Under reducing conditions zinc is bound to the reactive cysteines and the protein is inactive.

It localises to the cytoplasm. Redox regulated molecular chaperone. Protects both thermally unfolding and oxidatively damaged proteins from irreversible aggregation. Plays an important role in the bacterial defense system toward oxidative stress. This is 33 kDa chaperonin from Thermoanaerobacter pseudethanolicus (strain ATCC 33223 / 39E) (Clostridium thermohydrosulfuricum).